The chain runs to 304 residues: Protease HtpX homolog (304 aa).

2 consecutive transmembrane segments (helical) span residues 14 to 34 (VFIILGFFIFVLMVGAAIGII) and 39 to 59 (YLNGLILAAAIGAVYILIMVM). Zn(2+) is bound at residue H144. E145 is a catalytic residue. A Zn(2+)-binding site is contributed by H148. Helical transmembrane passes span 159-179 (IAIALVAVIAILSDLAMRLIF) and 202-222 (IIIYVVALIFVILAPIIATAI). Residue E231 participates in Zn(2+) binding. A disordered region spans residues 275–304 (SSPLKSKKDKPGLFDSHPPISSRIERLENM).

Belongs to the peptidase M48B family. The cofactor is Zn(2+).

The protein localises to the cell membrane. The polypeptide is Protease HtpX homolog (Listeria innocua serovar 6a (strain ATCC BAA-680 / CLIP 11262)).